An 809-amino-acid polypeptide reads, in one-letter code: Putative zinc metalloprotease TRE2 (809 aa).

Composition is skewed to polar residues over residues 1 to 12 and 20 to 30; these read MRSSYQPVSTTN and PTASSSHNLLM. The tract at residues 1–66 is disordered; it reads MRSSYQPVST…PSYEFDIEDP (66 aa). Over 1–125 the chain is Cytoplasmic; the sequence is MRSSYQPVST…KIGNPFILRR (125 aa). The segment covering 37 to 50 has biased composition (low complexity); sequence SPPSSNDNSIETNI. The helical; Signal-anchor for type II membrane protein transmembrane segment at 126 to 146 threads the bilayer; that stretch reads FFYIIFMSFIAYYVLSSGYLF. Over 147-809 the chain is Extracellular; the sequence is NEKASGSKGM…VEETNDIGYK (663 aa). N228 carries an N-linked (GlcNAc...) asparagine glycan. One can recognise a PA domain in the interval 255–349; sequence SNGKLSKVSL…STGDASGLNW (95 aa). N669 and N736 each carry an N-linked (GlcNAc...) asparagine glycan.

The protein belongs to the peptidase M28 family. M28B subfamily.

Its subcellular location is the membrane. This chain is Putative zinc metalloprotease TRE2 (TRE2), found in Saccharomyces cerevisiae (strain ATCC 204508 / S288c) (Baker's yeast).